Here is a 481-residue protein sequence, read N- to C-terminus: MDNQAVSALWSCASATCLSLDAKRHSIEPNPDGQASPDVNNNNNNHNKSTTTVDAHSRKLRHIAHTPRGSCFMALLLLLLLALNFRHAHSCGPGRGLGRRRERNLFPLVLKQTVPNLSEYHNSASGPLEGAIQRDSPKFKNLVLNYNRDIEFRDEEGTGADRVMSKRCREKLNMLAYSVMNEWPGVRLRVTESWDEDRQHGQESLHYEGRAVTIATSDHDQSKYGMLARLAVEAGFDWVSYVSRRHIYCSVKSDSSPSISHMHGCFTPESTALLESGAEKALGELAIGDRVLSMDVKGQPVYSEVILFMDRNLEQVENFVQLHTDGGAVLTVTPAHLISVWQPERQTLNFIFADRVEELDYVLVRDATGELQPQRVLRLGSVQSRGVVAPLTREGTIVVNSVAASCYAVISSQSLAHWGLAPMRLLSTLQSWMPAKGQLRTAQDKSTPKDATAQQQNGLHWYANALYKVKDYVLPKSWRHD.

The first 19 residues, 1–19 (MDNQAVSALWSCASATCLS), serve as a signal peptide directing secretion. A propeptide spanning residues 20 to 90 (LDAKRHSIEP…LALNFRHAHS (71 aa)) is cleaved from the precursor. The segment at 26-56 (SIEPNPDGQASPDVNNNNNNHNKSTTTVDAH) is disordered. Cysteine 91 carries N-palmitoyl cysteine lipidation. Residues glutamate 155, glutamate 156, aspartate 161, threonine 191, glutamate 192, aspartate 195, and aspartate 197 each contribute to the Ca(2+) site. The Cholesterol glycine ester moiety is linked to residue glycine 264.

Belongs to the hedgehog family. In terms of assembly, interacts with shf. Post-translationally, the C-terminal part of the hedgehog protein precursor displays an autoproteolysis activity that results in the cleavage of the full-length protein into two parts (N-product and C-product). In addition, the C-terminal part displays a cholesterol transferase activity that results by the covalent attachment of a cholesterol moiety to the C-terminal of the newly generated N-product. The N-product is the active species in both local and long-range signaling, whereas the C-product has no signaling activity. In terms of processing, cholesterylation is required for N-product targeting to lipid rafts and multimerization. N-palmitoylation by Rasp of the hedgehog N-product, within the secretory pathway, is required for the embryonic and larval patterning activities of the hedgehog signal.

The protein resides in the nucleus. Its subcellular location is the cytoplasm. The protein localises to the cell membrane. It carries out the reaction glycyl-L-cysteinyl-[protein] + cholesterol + H(+) = [protein]-C-terminal glycyl cholesterol ester + N-terminal L-cysteinyl-[protein]. In terms of biological role, the C-terminal part of the hedgehog protein precursor displays an autoproteolysis activity that results in the cleavage of the full-length protein into two parts (N-product and C-product). In addition, the C-terminal part displays a cholesterol transferase activity that results by the covalent attachment of a cholesterol moiety to the C-terminal of the newly generated N-product. Once cleaved, the C-product has no signaling activity and diffuses from the cell. Functionally, the dually lipidated hedgehog protein N-product is a morphogen which is essential for a variety of patterning events during development. Establishes the anterior-posterior axis of the embryonic segments and patterns the larval imaginal disks. Binds to the patched (ptc) receptor, which functions in association with smoothened (smo), to activate the transcription of target genes wingless (wg), decapentaplegic (dpp) and ptc. In the absence of hh, ptc represses the constitutive signaling activity of smo through fused (fu). Essential component of a signaling pathway which regulates the Duox-dependent gut immune response to bacterial uracil; required to activate Cad99C-dependent endosome formation, norpA-dependent Ca2+ mobilization and p38 MAPK, which are essential steps in the Duox-dependent production of reactive oxygen species (ROS) in response to intestinal bacterial infection. During photoreceptor differentiation, it up-regulates transcription of Ubr3, which in turn promotes the hh-signaling pathway by mediating the ubiquitination and degradation of cos. The polypeptide is Protein hedgehog (Drosophila hydei (Fruit fly)).